We begin with the raw amino-acid sequence, 93 residues long: Small ribosomal subunit protein uS19 (93 aa).

The protein belongs to the universal ribosomal protein uS19 family.

Its function is as follows. Protein S19 forms a complex with S13 that binds strongly to the 16S ribosomal RNA. The polypeptide is Small ribosomal subunit protein uS19 (Leptospira interrogans serogroup Icterohaemorrhagiae serovar copenhageni (strain Fiocruz L1-130)).